Here is a 451-residue protein sequence, read N- to C-terminus: F-box only protein 47 (451 aa).

Residues 41 to 91 (LGNFKVLPLEILHIILRYLSVKDIGMLSMVSKTVSQHIINYISTSSGSRRL) form the F-box domain.

In terms of assembly, part of a SCF (SKP1-cullin-F-box) protein ligase complex.

In terms of biological role, probably recognizes and binds to some phosphorylated proteins and promotes their ubiquitination and degradation. The polypeptide is F-box only protein 47 (Fbxo47) (Mus musculus (Mouse)).